We begin with the raw amino-acid sequence, 814 residues long: ATP-dependent RNA helicase dbp-7 (814 aa).

The interval 26–102 is disordered; that stretch reads GGRWRDRVKA…PPPPPTHAMK (77 aa). 2 stretches are compositionally biased toward basic and acidic residues: residues 28 to 42 and 69 to 78; these read RWRDRVKAQKGEKGG and QRTEDGDSGR. The Q motif signature appears at 145–174; sequence ENFLSLGLSRRVSQHLATKLEMKAPTAIQK. A Helicase ATP-binding domain is found at 178–384; the sequence is PQLVKEDSDA…EISLEDAVHI (207 aa). 191–198 serves as a coordination point for ATP; it reads AETGSGKT. A DEAD box motif is present at residues 313–316; sequence DEGD. A Helicase C-terminal domain is found at 422–622; that stretch reads RLVTLIALLK…GFATNINVPG (201 aa). Disordered stretches follow at residues 464 to 483, 662 to 695, and 741 to 795; these read TPRAEPEPKPEGEAPTKPNI, ESKSEKFAASKQGKKGKKDAKKDENKTPDNPLLV, and GIGG…AGRR. The segment covering 467 to 477 has biased composition (basic and acidic residues); the sequence is AEPEPKPEGEA. Positions 779 to 790 are enriched in acidic residues; sequence DDDERDFGAADE.

This sequence belongs to the DEAD box helicase family. DDX31/DBP7 subfamily.

The protein localises to the nucleus. It localises to the nucleolus. The enzyme catalyses ATP + H2O = ADP + phosphate + H(+). In terms of biological role, ATP-binding RNA helicase involved in the biogenesis of 60S ribosomal subunits and is required for the normal formation of 25S and 5.8S rRNAs. The sequence is that of ATP-dependent RNA helicase dbp-7 (dbp-7) from Neurospora crassa (strain ATCC 24698 / 74-OR23-1A / CBS 708.71 / DSM 1257 / FGSC 987).